A 201-amino-acid polypeptide reads, in one-letter code: Dephospho-CoA kinase (201 aa).

Residues 4–201 (IIGITGGIAS…LEGGRQDDRD (198 aa)) enclose the DPCK domain. 12–17 (ASGKST) serves as a coordination point for ATP.

The protein belongs to the CoaE family.

The protein resides in the cytoplasm. It carries out the reaction 3'-dephospho-CoA + ATP = ADP + CoA + H(+). It participates in cofactor biosynthesis; coenzyme A biosynthesis; CoA from (R)-pantothenate: step 5/5. Its function is as follows. Catalyzes the phosphorylation of the 3'-hydroxyl group of dephosphocoenzyme A to form coenzyme A. This chain is Dephospho-CoA kinase, found in Streptococcus pneumoniae (strain ATCC BAA-255 / R6).